Reading from the N-terminus, the 892-residue chain is Smad protein daf-3 (892 aa).

2 disordered regions span residues 1 to 43 (MGDH…GLED) and 135 to 161 (PYLD…FDTK). The span at 15-26 (IPPQFNYSQPGT) shows a compositional bias: polar residues. Positions 198-347 (KIVEYLMYYR…YEIVIGTMIV (150 aa)) constitute an MH1 domain. The segment at 505–552 (YPDFHHPFNQQPHQPPQLSQNHTSQQGSHQPGHQGQVPNDPPISRPVL) is disordered. Residues 528–540 (SQQGSHQPGHQGQ) show a composition bias toward low complexity. Residues 657 to 880 (WGTIVYYEKN…TNCFEPLGME (224 aa)) enclose the MH2 domain.

It belongs to the dwarfin/SMAD family. As to quaternary structure, interacts with R-SMADs daf-8 and daf-14. Interacts with daf-14 in a daf-8 dependent manner. May interact with daf-5.

The protein localises to the cytoplasm. The protein resides in the nucleus. It localises to the chromosome. Transcriptional regulator and common SMAD (co-SMAD), required to regulate entry into a developmentally arrested larval state known as dauer, in response to harsh environmental conditions. Probable component of transcriptional regulatory complex with SMAD protein daf-5. Acts antagonistically to SMAD signaling downstream of TGF-beta-like daf-7 signaling. Binds to the 5'-GTCTG-3' motif found in regulatory regions and may modulate the expression of genes involved in TGF-beta-like daf-7 and Notch lag-2 signaling. May regulate gene expression outside the dauer pathway. The chain is Smad protein daf-3 from Caenorhabditis elegans.